The primary structure comprises 286 residues: Energy-coupling factor transporter ATP-binding protein EcfA2 (286 aa).

One can recognise an ABC transporter domain in the interval 3 to 246 (IRFDNVSYTY…KEKLADWHIA (244 aa)). 40-47 (GQTGSGKS) serves as a coordination point for ATP.

This sequence belongs to the ABC transporter superfamily. Energy-coupling factor EcfA family. Forms a stable energy-coupling factor (ECF) transporter complex composed of 2 membrane-embedded substrate-binding proteins (S component), 2 ATP-binding proteins (A component) and 2 transmembrane proteins (T component).

The protein localises to the cell membrane. ATP-binding (A) component of a common energy-coupling factor (ECF) ABC-transporter complex. Unlike classic ABC transporters this ECF transporter provides the energy necessary to transport a number of different substrates. This chain is Energy-coupling factor transporter ATP-binding protein EcfA2, found in Staphylococcus aureus (strain bovine RF122 / ET3-1).